A 373-amino-acid polypeptide reads, in one-letter code: Queuine tRNA-ribosyltransferase (373 aa).

The Proton acceptor role is filled by Asp-93. Substrate contacts are provided by residues 93 to 97 (DSGGF), Asp-147, Gln-189, and Gly-216. The tract at residues 247-253 (GVGAPED) is RNA binding. Catalysis depends on Asp-266, which acts as the Nucleophile. The RNA binding; important for wobble base 34 recognition stretch occupies residues 271 to 275 (TRIAR). Residues Cys-304, Cys-306, Cys-309, and His-335 each coordinate Zn(2+).

This sequence belongs to the queuine tRNA-ribosyltransferase family. In terms of assembly, homodimer. Within each dimer, one monomer is responsible for RNA recognition and catalysis, while the other monomer binds to the replacement base PreQ1. Requires Zn(2+) as cofactor.

It catalyses the reaction 7-aminomethyl-7-carbaguanine + guanosine(34) in tRNA = 7-aminomethyl-7-carbaguanosine(34) in tRNA + guanine. It functions in the pathway tRNA modification; tRNA-queuosine biosynthesis. Its function is as follows. Catalyzes the base-exchange of a guanine (G) residue with the queuine precursor 7-aminomethyl-7-deazaguanine (PreQ1) at position 34 (anticodon wobble position) in tRNAs with GU(N) anticodons (tRNA-Asp, -Asn, -His and -Tyr). Catalysis occurs through a double-displacement mechanism. The nucleophile active site attacks the C1' of nucleotide 34 to detach the guanine base from the RNA, forming a covalent enzyme-RNA intermediate. The proton acceptor active site deprotonates the incoming PreQ1, allowing a nucleophilic attack on the C1' of the ribose to form the product. After dissociation, two additional enzymatic reactions on the tRNA convert PreQ1 to queuine (Q), resulting in the hypermodified nucleoside queuosine (7-(((4,5-cis-dihydroxy-2-cyclopenten-1-yl)amino)methyl)-7-deazaguanosine). This is Queuine tRNA-ribosyltransferase from Halothermothrix orenii (strain H 168 / OCM 544 / DSM 9562).